Consider the following 311-residue polypeptide: Phosphoribosylamine--glycine ligase (311 aa).

The region spanning 1–191 is the ATP-grasp domain; that stretch reads DPRVRKQYIQ…LVQVLLAACR (191 aa).

It belongs to the GARS family.

Its subcellular location is the plastid. It localises to the chloroplast. The catalysed reaction is 5-phospho-beta-D-ribosylamine + glycine + ATP = N(1)-(5-phospho-beta-D-ribosyl)glycinamide + ADP + phosphate + H(+). Its pathway is purine metabolism; IMP biosynthesis via de novo pathway; N(1)-(5-phospho-D-ribosyl)glycinamide from 5-phospho-alpha-D-ribose 1-diphosphate: step 2/2. The chain is Phosphoribosylamine--glycine ligase (PUR2) from Vigna unguiculata (Cowpea).